The primary structure comprises 370 residues: Aldo-keto reductase NECHADRAFT_45914 (370 aa).

Aspartate 78 contributes to the NADP(+) binding site. The active-site Proton donor is tyrosine 83. Histidine 174 lines the substrate pocket. NADP(+)-binding positions include 204-205 (SS), glutamine 230, 259-269 (APLASGRLARR), and 333-341 (STVQRIEEA).

Belongs to the aldo/keto reductase family.

Its pathway is secondary metabolite biosynthesis. Its function is as follows. Aldo-keto reductase; part of the gene cluster that mediates the biosynthesis of sansalvamide, a cyclic pentadepsipeptide that shows promising results as potential anti-cancer drug. The nonribosmal peptide synthetase NRPS30 produces sansalvamide by incorporating successively one phenylalanine, one leucine, one alpha-hydroxyisocaproic acid (HICA), one valine and one leucine before sansalvamide is released from by cyclization by the terminal C domain of NRPS30. The HICA residue is probably provided by reduction of alpha-ketoisocaproate by the cluster-specific aldo-keto reductase (NECHADRAFT_45914). The protein is Aldo-keto reductase NECHADRAFT_45914 of Fusarium vanettenii (strain ATCC MYA-4622 / CBS 123669 / FGSC 9596 / NRRL 45880 / 77-13-4) (Fusarium solani subsp. pisi).